A 161-amino-acid polypeptide reads, in one-letter code: Ribosome maturation factor RimP (161 aa).

It belongs to the RimP family.

Its subcellular location is the cytoplasm. Functionally, required for maturation of 30S ribosomal subunits. The polypeptide is Ribosome maturation factor RimP (Pelobacter propionicus (strain DSM 2379 / NBRC 103807 / OttBd1)).